The primary structure comprises 234 residues: Demethylmenaquinone methyltransferase (234 aa).

Residues Thr58, Asp79, and 106–107 (NA) contribute to the S-adenosyl-L-methionine site.

The protein belongs to the class I-like SAM-binding methyltransferase superfamily. MenG/UbiE family.

The enzyme catalyses a 2-demethylmenaquinol + S-adenosyl-L-methionine = a menaquinol + S-adenosyl-L-homocysteine + H(+). The protein operates within quinol/quinone metabolism; menaquinone biosynthesis; menaquinol from 1,4-dihydroxy-2-naphthoate: step 2/2. Its function is as follows. Methyltransferase required for the conversion of demethylmenaquinol (DMKH2) to menaquinol (MKH2). The polypeptide is Demethylmenaquinone methyltransferase (Geobacillus kaustophilus (strain HTA426)).